The sequence spans 274 residues: 2-dehydro-3-deoxyphosphooctonate aldolase (274 aa).

Belongs to the KdsA family.

The protein localises to the cytoplasm. The enzyme catalyses D-arabinose 5-phosphate + phosphoenolpyruvate + H2O = 3-deoxy-alpha-D-manno-2-octulosonate-8-phosphate + phosphate. Its pathway is carbohydrate biosynthesis; 3-deoxy-D-manno-octulosonate biosynthesis; 3-deoxy-D-manno-octulosonate from D-ribulose 5-phosphate: step 2/3. It functions in the pathway bacterial outer membrane biogenesis; lipopolysaccharide biosynthesis. This Rickettsia typhi (strain ATCC VR-144 / Wilmington) protein is 2-dehydro-3-deoxyphosphooctonate aldolase.